The following is a 291-amino-acid chain: 4-hydroxy-tetrahydrodipicolinate synthase (291 aa).

Residue Thr45 coordinates pyruvate. The Proton donor/acceptor role is filled by Tyr131. The active-site Schiff-base intermediate with substrate is Lys159. Residue Ile202 participates in pyruvate binding.

This sequence belongs to the DapA family. Homotetramer; dimer of dimers.

The protein resides in the cytoplasm. The enzyme catalyses L-aspartate 4-semialdehyde + pyruvate = (2S,4S)-4-hydroxy-2,3,4,5-tetrahydrodipicolinate + H2O + H(+). It participates in amino-acid biosynthesis; L-lysine biosynthesis via DAP pathway; (S)-tetrahydrodipicolinate from L-aspartate: step 3/4. Functionally, catalyzes the condensation of (S)-aspartate-beta-semialdehyde [(S)-ASA] and pyruvate to 4-hydroxy-tetrahydrodipicolinate (HTPA). The protein is 4-hydroxy-tetrahydrodipicolinate synthase of Methanosarcina barkeri (strain Fusaro / DSM 804).